The following is a 289-amino-acid chain: uncharacterized protein (289 aa).

Residues 1 to 19 (MAKWLGAPLARGVSTATRA) form the signal peptide. 2 helical membrane passes run 90–110 (GLLAAAFVASVLLGVGIGWGV) and 257–277 (AALSLSLYVSSDYGGGYLVFA).

The protein resides in the cell membrane. This is an uncharacterized protein from Mycobacterium tuberculosis (strain ATCC 25618 / H37Rv).